The following is a 215-amino-acid chain: Pyridoxine/pyridoxamine 5'-phosphate oxidase (215 aa).

Residues 9-12 and Lys69 contribute to the substrate site; that span reads RRDY. Residues 64 to 69, 79 to 80, Lys86, and Gln108 each bind FMN; these read RVLLLK and FT. Substrate is bound by residues Tyr126, Arg130, and Ser134. Residues 143–144 and Trp188 contribute to the FMN site; that span reads QS. A substrate-binding site is contributed by 194 to 196; the sequence is RLH. Position 198 (Arg198) interacts with FMN.

This sequence belongs to the pyridoxamine 5'-phosphate oxidase family. In terms of assembly, homodimer. Requires FMN as cofactor.

The enzyme catalyses pyridoxamine 5'-phosphate + O2 + H2O = pyridoxal 5'-phosphate + H2O2 + NH4(+). The catalysed reaction is pyridoxine 5'-phosphate + O2 = pyridoxal 5'-phosphate + H2O2. Its pathway is cofactor metabolism; pyridoxal 5'-phosphate salvage; pyridoxal 5'-phosphate from pyridoxamine 5'-phosphate: step 1/1. It participates in cofactor metabolism; pyridoxal 5'-phosphate salvage; pyridoxal 5'-phosphate from pyridoxine 5'-phosphate: step 1/1. Functionally, catalyzes the oxidation of either pyridoxine 5'-phosphate (PNP) or pyridoxamine 5'-phosphate (PMP) into pyridoxal 5'-phosphate (PLP). The polypeptide is Pyridoxine/pyridoxamine 5'-phosphate oxidase (Pseudomonas savastanoi pv. phaseolicola (strain 1448A / Race 6) (Pseudomonas syringae pv. phaseolicola (strain 1448A / Race 6))).